The chain runs to 211 residues: Histidine biosynthesis bifunctional protein HisIE (211 aa).

The interval 1–107 is phosphoribosyl-AMP cyclohydrolase; the sequence is MNKLIDFSKG…FNSEIESRFK (107 aa). The phosphoribosyl-ATP pyrophosphohydrolase stretch occupies residues 108–211; sequence IQALAQTIHQ…KGERKEVREW (104 aa).

It in the N-terminal section; belongs to the PRA-CH family. The protein in the C-terminal section; belongs to the PRA-PH family.

Its subcellular location is the cytoplasm. The catalysed reaction is 1-(5-phospho-beta-D-ribosyl)-ATP + H2O = 1-(5-phospho-beta-D-ribosyl)-5'-AMP + diphosphate + H(+). It carries out the reaction 1-(5-phospho-beta-D-ribosyl)-5'-AMP + H2O = 1-(5-phospho-beta-D-ribosyl)-5-[(5-phospho-beta-D-ribosylamino)methylideneamino]imidazole-4-carboxamide. The protein operates within amino-acid biosynthesis; L-histidine biosynthesis; L-histidine from 5-phospho-alpha-D-ribose 1-diphosphate: step 2/9. It functions in the pathway amino-acid biosynthesis; L-histidine biosynthesis; L-histidine from 5-phospho-alpha-D-ribose 1-diphosphate: step 3/9. The protein is Histidine biosynthesis bifunctional protein HisIE of Staphylococcus epidermidis (strain ATCC 35984 / DSM 28319 / BCRC 17069 / CCUG 31568 / BM 3577 / RP62A).